The chain runs to 509 residues: UDP-N-acetylmuramyl-tripeptide synthetase (509 aa).

124–130 contacts ATP; the sequence is GTNGKTS. UDP-N-acetyl-alpha-D-muramoyl-L-alanyl-D-glutamate is bound by residues 164-165, Ser-191, and Arg-199; that span reads TT. Position 231 is an N6-carboxylysine (Lys-231).

Belongs to the MurCDEF family. MurE subfamily. In terms of processing, carboxylation is probably crucial for Mg(2+) binding and, consequently, for the gamma-phosphate positioning of ATP.

Its subcellular location is the cytoplasm. Its pathway is cell wall biogenesis; peptidoglycan biosynthesis. Catalyzes the addition of an amino acid to the nucleotide precursor UDP-N-acetylmuramoyl-L-alanyl-D-glutamate (UMAG) in the biosynthesis of bacterial cell-wall peptidoglycan. The sequence is that of UDP-N-acetylmuramyl-tripeptide synthetase from Tropheryma whipplei (strain TW08/27) (Whipple's bacillus).